The primary structure comprises 332 residues: Cysteine and histidine-rich domain-containing protein 1 (332 aa).

An N-acetylalanine modification is found at Ala-2. An interaction with PPP5C region spans residues 2-77; it reads ALLCYNRGCG…KPPEPVKPEV (76 aa). Zn(2+)-binding residues include Cys-5, Cys-10, Cys-24, His-27, Cys-42, and Cys-43. CHORD domains lie at 5–64 and 157–216; these read CYNR…KGRH and CKNG…TGKH. The residue at position 47 (Thr-47) is a Phosphothreonine. The residue at position 51 (Ser-51) is a Phosphoserine. Residues Cys-59, His-64, Cys-157, Cys-162, Cys-176, His-179, Cys-194, Cys-195, Cys-211, and His-216 each contribute to the Zn(2+) site. Residues 62–82 are disordered; that stretch reads GRHNSEKPPEPVKPEVKTTEK. Basic and acidic residues predominate over residues 64 to 82; it reads HNSEKPPEPVKPEVKTTEK. An interaction with HSP90AA1 and HSP90AB1 region spans residues 65–316; sequence NSEKPPEPVK…AEPMQWASLE (252 aa). In terms of domain architecture, CS spans 227 to 316; that stretch reads VVPCRHDWHQ…AEPMQWASLE (90 aa).

Interacts with HSP90AA1, HSP90AB1, PPP5C, ROCK1 and ROCK2.

In terms of biological role, regulates centrosome duplication, probably by inhibiting the kinase activity of ROCK2. Proposed to act as co-chaperone for HSP90. May play a role in the regulation of NOD1 via a HSP90 chaperone complex. In vitro, has intrinsic chaperone activity. This function may be achieved by inhibiting association of ROCK2 with NPM1. Plays a role in ensuring the localization of the tyrosine kinase receptor EGFR to the plasma membrane, and thus ensures the subsequent regulation of EGFR activity and EGF-induced actin cytoskeleton remodeling. Involved in stress response. Prevents tumorigenesis. In Bos taurus (Bovine), this protein is Cysteine and histidine-rich domain-containing protein 1 (CHORDC1).